A 486-amino-acid chain; its full sequence is H2.0-like homeobox protein (486 aa).

Disordered regions lie at residues 83–173 and 330–486; these read ASFQ…SSKD and KWRH…LGGL. Over residues 125–135 the composition is skewed to low complexity; it reads QQQQQQQQPQQ. The homeobox DNA-binding region spans 276–335; sequence RSWSRAVFSNLQRKGLEKRFEIQKYVTKPDRKQLAAMLGLTDAQVKVWFQNRRMKWRHSK. Basic and acidic residues-rich tracts occupy residues 334-349 and 363-372; these read SKEA…EAGE and EERSPSRSEG. Positions 373–383 are enriched in acidic residues; that stretch reads EAESESSDPES. Residues 390–401 are compositionally biased toward basic and acidic residues; the sequence is DTERTEGTERSL. A compositionally biased stretch (low complexity) spans 409–420; sequence ASAAGALLAASS. Gly residues predominate over residues 421-440; the sequence is GGSGGSGGGGGGGFNFGGLS. Residues 441-474 are compositionally biased toward low complexity; the sequence is SGSTTSAGSSGSHSSGGASELLPAPQPSLSSAPK. Over residues 475–486 the composition is skewed to pro residues; the sequence is SPEPVPAPLGGL.

It belongs to the H2.0 homeobox family.

It is found in the nucleus. Functionally, transcription factor required for TBX21/T-bet-dependent maturation of Th1 cells as well as maintenance of Th1-specific gene expression. Involved in embryogenesis and hematopoiesis. In Bos taurus (Bovine), this protein is H2.0-like homeobox protein (HLX).